The sequence spans 151 residues: Transcriptional repressor NrdR (151 aa).

The segment at 3 to 34 (CPYCGYGESKVVDSRATDDKMAIRRRRECLKC) is a zinc-finger region. The region spanning 49-139 (LLVIKKNMSR…VYRQFKDINT (91 aa)) is the ATP-cone domain.

It belongs to the NrdR family. Zn(2+) is required as a cofactor.

Its function is as follows. Negatively regulates transcription of bacterial ribonucleotide reductase nrd genes and operons by binding to NrdR-boxes. In Clostridium kluyveri (strain NBRC 12016), this protein is Transcriptional repressor NrdR.